The primary structure comprises 181 residues: Translation initiation factor IF-3 (181 aa).

Belongs to the IF-3 family. Monomer.

It is found in the cytoplasm. In terms of biological role, IF-3 binds to the 30S ribosomal subunit and shifts the equilibrium between 70S ribosomes and their 50S and 30S subunits in favor of the free subunits, thus enhancing the availability of 30S subunits on which protein synthesis initiation begins. The sequence is that of Translation initiation factor IF-3 from Mycoplasma capricolum subsp. capricolum (strain California kid / ATCC 27343 / NCTC 10154).